The primary structure comprises 571 residues: Glutamine--tRNA ligase (571 aa).

Residues 35-45 (PEPNGYLHIGH) carry the 'HIGH' region motif. Residues 36–38 (EPN) and 42–48 (HIGHAKS) each bind ATP. Residues aspartate 68 and tyrosine 213 each contribute to the L-glutamine site. ATP contacts are provided by residues threonine 232, 262–263 (RL), and 270–272 (LSK). Residues 269–273 (ILSKR) carry the 'KMSKS' region motif.

The protein belongs to the class-I aminoacyl-tRNA synthetase family. Monomer.

It localises to the cytoplasm. It carries out the reaction tRNA(Gln) + L-glutamine + ATP = L-glutaminyl-tRNA(Gln) + AMP + diphosphate. In Buchnera aphidicola subsp. Acyrthosiphon pisum (strain 5A), this protein is Glutamine--tRNA ligase.